A 430-amino-acid polypeptide reads, in one-letter code: Probable histidine--tRNA ligase, cytoplasmic (430 aa).

Belongs to the class-II aminoacyl-tRNA synthetase family.

The protein resides in the cytoplasm. The catalysed reaction is tRNA(His) + L-histidine + ATP = L-histidyl-tRNA(His) + AMP + diphosphate + H(+). The sequence is that of Probable histidine--tRNA ligase, cytoplasmic from Vairimorpha ceranae (strain BRL01) (Microsporidian parasite).